The sequence spans 254 residues: Ribosomal RNA small subunit methyltransferase G (254 aa).

S-adenosyl-L-methionine is bound by residues glycine 84, phenylalanine 89, 136-137, and arginine 155; that span reads VE.

Belongs to the methyltransferase superfamily. RNA methyltransferase RsmG family.

It is found in the cytoplasm. In terms of biological role, specifically methylates the N7 position of a guanine in 16S rRNA. The polypeptide is Ribosomal RNA small subunit methyltransferase G (Synechococcus sp. (strain CC9311)).